We begin with the raw amino-acid sequence, 326 residues long: S-methyl-5'-thioadenosine phosphorylase (326 aa).

Phosphate contacts are provided by residues serine 44, 86–87 (RH), and 119–120 (SA). A substrate-binding site is contributed by methionine 220. A phosphate-binding site is contributed by threonine 221. Residue 244–246 (DYD) participates in substrate binding.

The protein belongs to the PNP/MTAP phosphorylase family. MTAP subfamily. In terms of assembly, homohexamer. Dimer of a homotrimer.

The catalysed reaction is S-methyl-5'-thioadenosine + phosphate = 5-(methylsulfanyl)-alpha-D-ribose 1-phosphate + adenine. It participates in amino-acid biosynthesis; L-methionine biosynthesis via salvage pathway; S-methyl-5-thio-alpha-D-ribose 1-phosphate from S-methyl-5'-thioadenosine (phosphorylase route): step 1/1. Its function is as follows. Catalyzes the reversible phosphorylation of S-methyl-5'-thioadenosine (MTA) to adenine and 5-methylthioribose-1-phosphate. Involved in the breakdown of MTA, a major by-product of polyamine biosynthesis. Responsible for the first step in the methionine salvage pathway after MTA has been generated from S-adenosylmethionine. Has broad substrate specificity with 6-aminopurine nucleosides as preferred substrates. The chain is S-methyl-5'-thioadenosine phosphorylase from Synechocystis sp. (strain PCC 6803 / GT-S).